A 341-amino-acid chain; its full sequence is Phosphate acyltransferase (341 aa).

This sequence belongs to the PlsX family. In terms of assembly, homodimer. Probably interacts with PlsY.

It localises to the cytoplasm. The enzyme catalyses a fatty acyl-[ACP] + phosphate = an acyl phosphate + holo-[ACP]. The protein operates within lipid metabolism; phospholipid metabolism. Functionally, catalyzes the reversible formation of acyl-phosphate (acyl-PO(4)) from acyl-[acyl-carrier-protein] (acyl-ACP). This enzyme utilizes acyl-ACP as fatty acyl donor, but not acyl-CoA. The protein is Phosphate acyltransferase of Lacticaseibacillus casei (strain BL23) (Lactobacillus casei).